We begin with the raw amino-acid sequence, 999 residues long: Helicase required for RNAi-mediated heterochromatin assembly 1 (999 aa).

A disordered region spans residues 61 to 90; the sequence is EQIETSETSKTQDSEGNKVDKNLKENKSIR. Basic and acidic residues predominate over residues 70 to 88; that stretch reads KTQDSEGNKVDKNLKENKS. S94 carries the phosphoserine modification. A compositionally biased stretch (basic and acidic residues) spans 106-124; that stretch reads RNDITSGKNREFENEHHPA. The interval 106 to 131 is disordered; the sequence is RNDITSGKNREFENEHHPASDTSSWR. 393 to 400 contacts ATP; the sequence is GPPGTGKS.

In terms of assembly, cid12, hrr1 and rdp1 interact forming the RNA-directed RNA polymerase complex (RDRC). The RDRC complex interacts with the RITS complex via interaction between ago1 and hrr1. Clr4 has a role in mediating this interaction.

The protein localises to the cytoplasm. It localises to the nucleus. The enzyme catalyses ATP + H2O = ADP + phosphate + H(+). Functionally, has a role in the RNA interference (RNAi) pathway which is important for heterochromatin formation and accurate chromosome segregation. A member of the RNA-directed RNA polymerase complex (RDRC) which is involved in the generation of small interfering RNAs (siRNAs) and mediate their association with the RNA-induced transcriptional silencing (RITS) complex. RITS acts as a priming complex for dsRNA synthesis at the site of non-coding centromeric RNA. This chain is Helicase required for RNAi-mediated heterochromatin assembly 1 (hrr1), found in Schizosaccharomyces pombe (strain 972 / ATCC 24843) (Fission yeast).